Reading from the N-terminus, the 158-residue chain is Transcriptional repressor NrdR (158 aa).

The segment at 3 to 34 (CPSCQNTDSRVLESRAAEGGRSVRRRRECLNC) is a zinc-finger region. The ATP-cone domain maps to 49 to 139 (ITVIKRNGHR…VYRHFRSVSD (91 aa)).

This sequence belongs to the NrdR family. Zn(2+) is required as a cofactor.

Its function is as follows. Negatively regulates transcription of bacterial ribonucleotide reductase nrd genes and operons by binding to NrdR-boxes. The chain is Transcriptional repressor NrdR from Synechococcus sp. (strain CC9311).